The sequence spans 148 residues: Truncated transcription factor CAULIFLOWER D (148 aa).

Residues 1–61 form the MADS-box domain; it reads MGRGRVEMKR…GKLFEYSSES (61 aa). Residues 90–148 enclose the K-box; partial domain; it reads QTNWSMEYSRLKAKIELWERNQRHYLGEDLESISIKELQNLEQQLDTSLKHIRSRKVCK.

In terms of assembly, homodimer capable of binding to CArG-box sequences.

The protein localises to the nucleus. In terms of biological role, probable transcription factor that promotes early floral meristem identity in synergy with APETALA1, FRUITFULL and LEAFY. Is required subsequently for the transition of an inflorescence meristem into a floral meristem. Seems to be partially redundant to the function of APETALA1. This Brassica oleracea var. botrytis (Cauliflower) protein is Truncated transcription factor CAULIFLOWER D (CAL-D).